Here is a 214-residue protein sequence, read N- to C-terminus: uncharacterized protein (214 aa).

The helical transmembrane segment at 10 to 30 (LLLAGIGGFMVGGLASWVVSS) threads the bilayer. Residues 147–157 (SSQANSQSTQP) are compositionally biased toward polar residues. Residues 147-166 (SSQANSQSTQPRDPIPTENF) form a disordered region.

It is found in the membrane. This is an uncharacterized protein from Schizosaccharomyces pombe (strain 972 / ATCC 24843) (Fission yeast).